Here is a 359-residue protein sequence, read N- to C-terminus: Peptide chain release factor 1 (359 aa).

An N5-methylglutamine modification is found at Gln236. Residues 288–307 are disordered; the sequence is QDEQDAERKSTIGTGDRSER. Residues 293-307 show a composition bias toward basic and acidic residues; the sequence is AERKSTIGTGDRSER.

Belongs to the prokaryotic/mitochondrial release factor family. In terms of processing, methylated by PrmC. Methylation increases the termination efficiency of RF1.

The protein localises to the cytoplasm. In terms of biological role, peptide chain release factor 1 directs the termination of translation in response to the peptide chain termination codons UAG and UAA. This chain is Peptide chain release factor 1 (prfA), found in Streptococcus gordonii (strain Challis / ATCC 35105 / BCRC 15272 / CH1 / DL1 / V288).